Reading from the N-terminus, the 125-residue chain is Holo-[acyl-carrier-protein] synthase (125 aa).

Residues Asp-8 and Glu-57 each coordinate Mg(2+).

It belongs to the P-Pant transferase superfamily. AcpS family. It depends on Mg(2+) as a cofactor.

It localises to the cytoplasm. The catalysed reaction is apo-[ACP] + CoA = holo-[ACP] + adenosine 3',5'-bisphosphate + H(+). Its function is as follows. Transfers the 4'-phosphopantetheine moiety from coenzyme A to a Ser of acyl-carrier-protein. The sequence is that of Holo-[acyl-carrier-protein] synthase from Geotalea daltonii (strain DSM 22248 / JCM 15807 / FRC-32) (Geobacter daltonii).